The primary structure comprises 430 residues: Glutamate-1-semialdehyde 2,1-aminomutase (430 aa).

The residue at position 267 (Lys-267) is an N6-(pyridoxal phosphate)lysine.

It belongs to the class-III pyridoxal-phosphate-dependent aminotransferase family. HemL subfamily. In terms of assembly, homodimer. Pyridoxal 5'-phosphate is required as a cofactor.

It localises to the cytoplasm. It catalyses the reaction (S)-4-amino-5-oxopentanoate = 5-aminolevulinate. Its pathway is porphyrin-containing compound metabolism; protoporphyrin-IX biosynthesis; 5-aminolevulinate from L-glutamyl-tRNA(Glu): step 2/2. The protein is Glutamate-1-semialdehyde 2,1-aminomutase of Desulfotalea psychrophila (strain LSv54 / DSM 12343).